A 437-amino-acid polypeptide reads, in one-letter code: Glucose-1-phosphate adenylyltransferase (437 aa).

Residues Tyr-113, Gly-179, Glu-194–Lys-195, and Ser-212 each bind alpha-D-glucose 1-phosphate.

This sequence belongs to the bacterial/plant glucose-1-phosphate adenylyltransferase family. Homotetramer.

The enzyme catalyses alpha-D-glucose 1-phosphate + ATP + H(+) = ADP-alpha-D-glucose + diphosphate. The protein operates within glycan biosynthesis; glycogen biosynthesis. Its function is as follows. Involved in the biosynthesis of ADP-glucose, a building block required for the elongation reactions to produce glycogen. Catalyzes the reaction between ATP and alpha-D-glucose 1-phosphate (G1P) to produce pyrophosphate and ADP-Glc. This Haemophilus influenzae (strain 86-028NP) protein is Glucose-1-phosphate adenylyltransferase.